Consider the following 376-residue polypeptide: NAD-capped RNA hydrolase (376 aa).

The Zn(2+) site is built by Cys-182, Cys-185, Cys-200, and Cys-211. Substrate-binding positions include Tyr-222, 258 to 260 (AGF), Glu-274, Glu-278, and Glu-321. Residues 223–351 (PRTDPCVIMV…KDGPAPILFP (129 aa)) form the Nudix hydrolase domain. Positions 258, 274, 278, and 321 each coordinate Mg(2+). A Nudix box motif is present at residues 259–280 (GFLEPGESLEEAVVRETYEESG). Positions 374–376 (VKM) match the Microbody targeting signal motif.

Belongs to the Nudix hydrolase family. NudC subfamily. As to quaternary structure, homodimer. Requires Mg(2+) as cofactor. The cofactor is Zn(2+).

It catalyses the reaction a 5'-end NAD(+)-phospho-ribonucleoside in mRNA + H2O = a 5'-end phospho-adenosine-phospho-ribonucleoside in mRNA + beta-nicotinamide D-ribonucleotide + 2 H(+). It carries out the reaction NAD(+) + H2O = beta-nicotinamide D-ribonucleotide + AMP + 2 H(+). The enzyme catalyses NADH + H2O = reduced beta-nicotinamide D-ribonucleotide + AMP + 2 H(+). Functionally, mRNA decapping enzyme that specifically removes the nicotinamide adenine dinucleotide (NAD) cap from a subset of mRNAs by hydrolyzing the diphosphate linkage to produce nicotinamide mononucleotide (NMN) and 5' monophosphate mRNA. The NAD-cap is present at the 5'-end of some RNAs; in contrast to the canonical N7 methylguanosine (m7G) cap, the NAD cap promotes mRNA decay. Mediates the hydrolysis of some nucleoside diphosphate derivatives. The polypeptide is NAD-capped RNA hydrolase (Schizosaccharomyces pombe (strain 972 / ATCC 24843) (Fission yeast)).